The primary structure comprises 334 residues: Glutaminase (334 aa).

7 residues coordinate substrate: serine 76, asparagine 126, glutamate 170, asparagine 177, tyrosine 201, tyrosine 253, and valine 271.

It belongs to the glutaminase family. As to quaternary structure, homotetramer.

It carries out the reaction L-glutamine + H2O = L-glutamate + NH4(+). This Trichormus variabilis (strain ATCC 29413 / PCC 7937) (Anabaena variabilis) protein is Glutaminase.